The chain runs to 461 residues: MTSILTPRQAEELHKAIIAYLSANNLSSSATALRTELGLAEDVFDAATAKKYEGLIEKKWTSVVRLQKKIMDLESRNNALQSELDNATPLSLAKRNTDPTAWLPAPRPRYSLESHQNTINCIAFHPVYSSIASGSDDCTIKIWDWELGELERTIKSHTRPVLDVDFGGPRGGILLASCSSDLTIKLWDPSDDYKNIRTLPGHDHSVSAIRFMPSGASGAAMSGNLLVSASRDMTLKIWDVSTGFCLKTIRGHTAWIRDVYPSLDGRYLLSTGDDSTVRLWDLSVTNPENRLTMIGHDHYIECCALAPPSSYPFLSRLAGLKKPPAATSTAEFMASGSRDKTIKLWDARGTLLKTLIGHDNWVRALVFHPGGRYLLSVSDDKTLRCWDLEQDGKCVKTIGDVHERFVTCLRWAPGVVMDAPAEADGQSNGTPRKKTEAAPAVRIRCVIATGSVDMKLRIFAN.

Positions 9–41 (QAEELHKAIIAYLSANNLSSSATALRTELGLAE) constitute a LisH domain. The stretch at 61–88 (TSVVRLQKKIMDLESRNNALQSELDNAT) forms a coiled coil. 8 WD repeats span residues 114-155 (SHQN…RTIK), 157-197 (HTRP…KNIR), 201-248 (GHDH…CLKT), 251-290 (GHTAWIRDVYPSLDGRYLLSTGDDSTVRLWDLSVTNPENR), 295-355 (GHDH…LKTL), 357-396 (GHDNWVRALVFHPGGRYLLSVSDDKTLRCWDLEQDGKCVK), 401-444 (VHER…VRIR), and 446-461 (VIATGSVDMKLRIFAN).

This sequence belongs to the WD repeat LIS1/nudF family. As to quaternary structure, self-associates. Interacts with NDL1 and dynein.

Its subcellular location is the cytoplasm. It is found in the cytoskeleton. The protein resides in the spindle pole. Its function is as follows. Positively regulates the activity of the minus-end directed microtubule motor protein dynein. May enhance dynein-mediated microtubule sliding by targeting dynein to the microtubule plus end. Required for nuclear migration during vegetative growth as well as development. Required for retrograde early endosome (EE) transport from the hyphal tip. Required for localization of dynein to the mitotic spindle poles. Recruits additional proteins to the dynein complex at SPBs. The chain is Nuclear distribution protein PAC1 from Pyricularia oryzae (strain 70-15 / ATCC MYA-4617 / FGSC 8958) (Rice blast fungus).